Here is a 488-residue protein sequence, read N- to C-terminus: Glutamyl-tRNA(Gln) amidotransferase subunit A (488 aa).

Residues K78 and S153 each act as charge relay system in the active site. Catalysis depends on S177, which acts as the Acyl-ester intermediate.

Belongs to the amidase family. GatA subfamily. As to quaternary structure, heterotrimer of A, B and C subunits.

It catalyses the reaction L-glutamyl-tRNA(Gln) + L-glutamine + ATP + H2O = L-glutaminyl-tRNA(Gln) + L-glutamate + ADP + phosphate + H(+). Functionally, allows the formation of correctly charged Gln-tRNA(Gln) through the transamidation of misacylated Glu-tRNA(Gln) in organisms which lack glutaminyl-tRNA synthetase. The reaction takes place in the presence of glutamine and ATP through an activated gamma-phospho-Glu-tRNA(Gln). This chain is Glutamyl-tRNA(Gln) amidotransferase subunit A, found in Solidesulfovibrio magneticus (strain ATCC 700980 / DSM 13731 / RS-1) (Desulfovibrio magneticus).